Consider the following 361-residue polypeptide: sn-glycerol-3-phosphate import ATP-binding protein UgpC (361 aa).

One can recognise an ABC transporter domain in the interval 4–235; sequence LSFRNLKKTY…PASTFVAGFI (232 aa). 37–44 contacts ATP; it reads GPSGCGKS.

This sequence belongs to the ABC transporter superfamily. sn-glycerol-3-phosphate importer (TC 3.A.1.1.3) family. In terms of assembly, the complex is composed of two ATP-binding proteins (UgpC), two transmembrane proteins (UgpA and UgpE) and a solute-binding protein (UgpB).

It is found in the cell inner membrane. It carries out the reaction sn-glycerol 3-phosphate(out) + ATP + H2O = sn-glycerol 3-phosphate(in) + ADP + phosphate + H(+). Its function is as follows. Part of the ABC transporter complex UgpBAEC involved in sn-glycerol-3-phosphate (G3P) import. Responsible for energy coupling to the transport system. This chain is sn-glycerol-3-phosphate import ATP-binding protein UgpC, found in Bordetella avium (strain 197N).